Reading from the N-terminus, the 122-residue chain is Putative TLX1 neighbor protein (122 aa).

The disordered stretch occupies residues 21-122 (SLLSQEAMGP…LGGGRGQRGQ (102 aa)). The span at 113 to 122 (LGGGRGQRGQ) shows a compositional bias: gly residues.

The protein is Putative TLX1 neighbor protein (TLX1NB) of Homo sapiens (Human).